A 260-amino-acid polypeptide reads, in one-letter code: HTH-type transcriptional activator FapR (260 aa).

Positions E154–G251 constitute an HTH araC/xylS-type domain. DNA-binding regions (H-T-H motif) lie at residues S171 to C192 and I218 to Y241.

As to quaternary structure, homodimer.

In terms of biological role, positive regulator of the expression of the 987P operon for the fimbrial protein in enterotoxigenic E.coli. In Escherichia coli, this protein is HTH-type transcriptional activator FapR.